Here is a 142-residue protein sequence, read N- to C-terminus: Putative pterin-4-alpha-carbinolamine dehydratase (142 aa).

It belongs to the pterin-4-alpha-carbinolamine dehydratase family.

It carries out the reaction (4aS,6R)-4a-hydroxy-L-erythro-5,6,7,8-tetrahydrobiopterin = (6R)-L-erythro-6,7-dihydrobiopterin + H2O. The chain is Putative pterin-4-alpha-carbinolamine dehydratase (pcbd-1) from Caenorhabditis elegans.